A 604-amino-acid chain; its full sequence is MEPPRGPPVSGAEPSRAVGTVKVYLPNKQRTVVTVREGMSVYDSLDKALKVRGLNQDCCVVYRLIKGRKTVTAWDTAIAPLDGEELIVEVLEDVPLTMHNFVRKTFFSLAFCDFCLKFLFHGFRCQTCGYKFHQHCSSKVPTVCVDMSTNRRQFYHSIQDLSGGSRQQEAPSNLSVNELLTPQGPSPFTQQRDQEHFSFPAPANPPLQRIRSTSTPNVHMVSTTAPMDSSLMQFTAQSFSTDAAGRGGDGAPRGSPSPASVSSGRKSPHSKLPSEQRERKSLADEKKKVKNLGYRDSGYYWEVPPSEVQLLKRIGTGSFGTVFRGRWHGDVAVKVLKVAQPTAEQAQAFKNEMQVLRKTRHVNILLFMGFMTRPGFAIITQWCEGSSLYHHLHVADTRFDMVQLIDVARQTAQGMDYLHAKNIIHRDLKSNNIFLHEGLTVKIGDFGLATVKTRWSGAQPLEQPSGSVLWMAAEVIRMQDPNPYSFQSDVYAYGVVLYELMTGSLPYSHIGSRDQIIFMVGRGYLSPDLSKIFSNCPKAMRRLLTDCLKFQREERPLFPQILATIELLQRSLPKIERSASEPSLHRTQADELPACLLSAARLVP.

An RBD domain is found at 19 to 91; the sequence is GTVKVYLPNK…DGEELIVEVL (73 aa). The Phorbol-ester/DAG-type zinc-finger motif lies at 98–144; it reads MHNFVRKTFFSLAFCDFCLKFLFHGFRCQTCGYKFHQHCSSKVPTVC. Residues His-99, Cys-112, Cys-115, Cys-125, Cys-128, His-133, Cys-136, and Cys-144 each coordinate Zn(2+). Residues Ser-157 and Ser-162 each carry the phosphoserine modification. Disordered regions lie at residues 177 to 222 and 241 to 288; these read NELL…HMVS and TDAA…EKKK. At Thr-181 the chain carries Phosphothreonine. Ser-186 carries the post-translational modification Phosphoserine. Positions 210–222 are enriched in polar residues; the sequence is IRSTSTPNVHMVS. Over residues 252 to 265 the composition is skewed to low complexity; sequence PRGSPSPASVSSGR. Residues Ser-255 and Ser-267 each carry the phosphoserine modification. Residues 272-287 show a composition bias toward basic and acidic residues; sequence LPSEQRERKSLADEKK. Positions 308–568 constitute a Protein kinase domain; sequence VQLLKRIGTG…PQILATIELL (261 aa). ATP-binding positions include 314–322 and Lys-334; that span reads IGTGSFGTV. The residue at position 316 (Thr-316) is a Phosphothreonine. Asp-427 acts as the Proton acceptor in catalysis.

It belongs to the protein kinase superfamily. TKL Ser/Thr protein kinase family. RAF subfamily. As to quaternary structure, interacts with TH1L/NELFD. It depends on Zn(2+) as a cofactor. Post-translationally, dephosphorylation by the SHOC2-MRAS-PP1c (SMP) complex consisting of SHOC2, GTP-bound M-Ras/MRAS and the catalytic subunit of protein phosphatase 1 (PPP1CA, PPP1CB or PPP1CC); this relieves inactivation and stimulates kinase activity.

The enzyme catalyses L-seryl-[protein] + ATP = O-phospho-L-seryl-[protein] + ADP + H(+). It catalyses the reaction L-threonyl-[protein] + ATP = O-phospho-L-threonyl-[protein] + ADP + H(+). Functionally, involved in the transduction of mitogenic signals from the cell membrane to the nucleus. May also regulate the TOR signaling cascade. Phosphorylates PFKFB2. This chain is Serine/threonine-protein kinase A-Raf (Araf), found in Mus musculus (Mouse).